A 159-amino-acid chain; its full sequence is Phosphopantetheine adenylyltransferase (159 aa).

T10 serves as a coordination point for substrate. Residues 10–11 and H18 contribute to the ATP site; that span reads TF. Substrate is bound by residues K42, M74, and R88. ATP is bound by residues 89–91, E99, and 124–130; these read GLR and WSFISSS.

The protein belongs to the bacterial CoaD family. In terms of assembly, homohexamer. The cofactor is Mg(2+).

It localises to the cytoplasm. The catalysed reaction is (R)-4'-phosphopantetheine + ATP + H(+) = 3'-dephospho-CoA + diphosphate. Its pathway is cofactor biosynthesis; coenzyme A biosynthesis; CoA from (R)-pantothenate: step 4/5. Functionally, reversibly transfers an adenylyl group from ATP to 4'-phosphopantetheine, yielding dephospho-CoA (dPCoA) and pyrophosphate. The sequence is that of Phosphopantetheine adenylyltransferase from Salmonella typhimurium (strain LT2 / SGSC1412 / ATCC 700720).